Here is a 448-residue protein sequence, read N- to C-terminus: Doublesex- and mab-3-related transcription factor A2 (448 aa).

Residues 57–104 (CARCRNHGVVSALKGHKRYCRWKDCMCAKCTLIAERQRVMAAQVALRR) constitute a DNA-binding region (DM). The span at 166–187 (SQLSGSATPQQSVGKPASTESD) shows a compositional bias: polar residues. The disordered stretch occupies residues 166 to 259 (SQLSGSATPQ…SPSSAASRHM (94 aa)). The span at 229–239 (GSVSSLGSDSG) shows a compositional bias: low complexity. The region spanning 259–294 (MNAIDILTRVFPSHKRSVQELVLQGCGKDVVRAIEQ) is the DMA domain.

Belongs to the DMRT family.

It localises to the nucleus. May be involved in sexual development. The protein is Doublesex- and mab-3-related transcription factor A2 (dmrta2) of Monopterus albus (Swamp eel).